The sequence spans 1038 residues: Kinesin-like protein KIF17 (1038 aa).

The Kinesin motor domain occupies 5–335 (SVKVVVRCRP…LRYANRAKNI (331 aa)). ATP is bound at residue 91 to 98 (GQTGSGKS). A coiled-coil region spans residues 346-470 (KDALLREYQE…ETEAILKAEV (125 aa)). Disordered regions lie at residues 379–401 (TQTPPGPVQSEEKLLSPTTVQQD), 503–559 (LSMP…GPEE), and 636–657 (DSSQTVVPQIPKQPSSADLLEP). 2 stretches are compositionally biased toward polar residues: residues 533 to 551 (SEFSFESNECSTLEDSATS) and 636 to 651 (DSSQTVVPQIPKQPSS). Residues 748 to 855 (QQVLARLQLL…QLEKIDYLAT (108 aa)) adopt a coiled-coil conformation. 2 disordered regions span residues 916-940 (VVPTGTQNKPARKTSAVDSGEPHMQ) and 976-1038 (MKSL…GEPL). Low complexity predominate over residues 983–1000 (NSPPGLNSSLSNNSALPP).

It belongs to the TRAFAC class myosin-kinesin ATPase superfamily. Kinesin family. Homodimer. Interacts with APBA1 (via PDZ domain); the interaction is direct and is required for association of KIF17 with the cargo that is to be transported. Interacts with IFT B complex components IFT52 and IFT57. Interacts with IFT70B. Interacts with PIWIL1. Interacts with TBATA. In terms of tissue distribution, highly expressed in the gray matter of the brain, especially in the hippocampus.

The protein localises to the cytoplasm. The protein resides in the cytoskeleton. Its subcellular location is the cell projection. It is found in the cilium. It localises to the dendrite. In terms of biological role, dendrite-specific motor protein which, in association with the Apba1-containing complex (LIN-10-LIN-2-LIN-7 complex), transports vesicles containing N-methyl-D-aspartate (NMDA) receptor subunit NR2B along microtubules. In Mus musculus (Mouse), this protein is Kinesin-like protein KIF17 (Kif17).